Consider the following 375-residue polypeptide: Decapping and exoribonuclease protein Rai1 (375 aa).

Substrate is bound by residues arginine 43 and 120–122; that span reads LRG. Residues glutamate 180, glutamate 222, aspartate 224, glutamate 247, and leucine 248 each coordinate Mg(2+). Glutamate 222 lines the substrate pocket. Lysine 249 and glutamine 274 together coordinate substrate.

Belongs to the DXO/Dom3Z family. In terms of assembly, interacts with Rat1. Mg(2+) serves as cofactor.

It catalyses the reaction a 5'-end triphospho-ribonucleoside in mRNA + H2O = a 5'-end phospho-ribonucleoside in mRNA + diphosphate + H(+). The enzyme catalyses a 5'-end NAD(+)-phospho-ribonucleoside in mRNA + H2O = a 5'-end phospho-ribonucleoside in mRNA + NAD(+) + H(+). It carries out the reaction a 5'-end (N(7)-methyl 5'-triphosphoguanosine)-ribonucleoside-ribonucleotide in mRNA + H2O = a (N(7)-methyl 5'-triphosphoguanosine)-nucleoside + a 5'-end phospho-ribonucleoside in mRNA + H(+). Decapping enzyme for NAD-capped RNAs: specifically hydrolyzes the nicotinamide adenine dinucleotide (NAD) cap from a subset of RNAs by removing the entire NAD moiety from the 5'-end of an NAD-capped RNA. The NAD-cap is present at the 5'-end of some RNAs and snoRNAs. In contrast to the canonical 5'-end N7 methylguanosine (m7G) cap, the NAD cap promotes mRNA decay. Also acts as a non-canonical decapping enzyme that removes the entire cap structure of m7G capped or incompletely capped RNAs and mediates their subsequent degradation. Specifically degrades pre-mRNAs with a defective 5'-end m7G cap and is part of a pre-mRNA capping quality control. Possesses 5'-pyrophosphohydrolase activity, hydrolyzing the 5'-end triphosphate to release pyrophosphates, and 5'-3' exonuclease activity. May be involved in RNA degradation in the nucleus. The protein is Decapping and exoribonuclease protein Rai1 of Drosophila melanogaster (Fruit fly).